The chain runs to 153 residues: Probable ubiquitin-conjugating enzyme E2 C (153 aa).

One can recognise a UBC core domain in the interval 6-153; that stretch reads SVSKRLQSEL…KRYQEATSRP (148 aa). Cys-90 acts as the Glycyl thioester intermediate in catalysis.

The protein belongs to the ubiquitin-conjugating enzyme family. Component of the APC/C complex. Autoubiquitinated by the APC/C complex, leading to its degradation by the proteasome.

The catalysed reaction is S-ubiquitinyl-[E1 ubiquitin-activating enzyme]-L-cysteine + [E2 ubiquitin-conjugating enzyme]-L-cysteine = [E1 ubiquitin-activating enzyme]-L-cysteine + S-ubiquitinyl-[E2 ubiquitin-conjugating enzyme]-L-cysteine.. It participates in protein modification; protein ubiquitination. Catalyzes the covalent attachment of ubiquitin to other proteins. Acts as an essential factor of the anaphase promoting complex/cyclosome (APC/C), a cell cycle-regulated ubiquitin ligase that controls progression through mitosis. Acts by initiating polyubiquitin chains on APC/C substrates, leading to the degradation of APC/C substrates by the proteasome and promoting mitotic exit. This chain is Probable ubiquitin-conjugating enzyme E2 C (ube2c), found in Dictyostelium discoideum (Social amoeba).